A 142-amino-acid polypeptide reads, in one-letter code: Large ribosomal subunit protein uL11 (142 aa).

Belongs to the universal ribosomal protein uL11 family. As to quaternary structure, part of the ribosomal stalk of the 50S ribosomal subunit. Interacts with L10 and the large rRNA to form the base of the stalk. L10 forms an elongated spine to which L12 dimers bind in a sequential fashion forming a multimeric L10(L12)X complex. Post-translationally, one or more lysine residues are methylated.

Forms part of the ribosomal stalk which helps the ribosome interact with GTP-bound translation factors. The protein is Large ribosomal subunit protein uL11 of Shewanella frigidimarina (strain NCIMB 400).